A 59-amino-acid chain; its full sequence is Potassium channel toxin alpha-KTx 3.10 (59 aa).

The signal sequence occupies residues 1–22 (MKVFFAVLIALFVCSMVIGIHG). Disulfide bonds link cysteine 30–cysteine 50, cysteine 36–cysteine 55, and cysteine 40–cysteine 57.

This sequence belongs to the short scorpion toxin superfamily. Potassium channel inhibitor family. Alpha-KTx 03 subfamily. As to expression, expressed by the venom gland.

Its subcellular location is the secreted. In terms of biological role, inhibits insect potassium channel. Is at least a 100-fold more potent against the Drosophila Shaker channel than towards its mammalian homologs Kv1.1/KCNA1 and Kv1.3/KCNA3. The polypeptide is Potassium channel toxin alpha-KTx 3.10 (Buthus israelis (Israeli scorpion)).